Here is a 100-residue protein sequence, read N- to C-terminus: Putative pterin-4-alpha-carbinolamine dehydratase 2 (100 aa).

The protein belongs to the pterin-4-alpha-carbinolamine dehydratase family.

It carries out the reaction (4aS,6R)-4a-hydroxy-L-erythro-5,6,7,8-tetrahydrobiopterin = (6R)-L-erythro-6,7-dihydrobiopterin + H2O. This chain is Putative pterin-4-alpha-carbinolamine dehydratase 2, found in Cupriavidus pinatubonensis (strain JMP 134 / LMG 1197) (Cupriavidus necator (strain JMP 134)).